The sequence spans 102 residues: Iron-sulfur cluster assembly protein CyaY (102 aa).

The protein belongs to the frataxin family.

In terms of biological role, involved in iron-sulfur (Fe-S) cluster assembly. May act as a regulator of Fe-S biogenesis. The sequence is that of Iron-sulfur cluster assembly protein CyaY from Pasteurella multocida (strain Pm70).